The primary structure comprises 143 residues: Large ribosomal subunit protein uL15 (143 aa).

Residues 1–57 (MQLNNLKPAAGSKHAKRRVGRGIGSGLGKTAGRGHKGQKSRSGGFHKVGFEGGQMPL) form a disordered region. Over residues 21–31 (RGIGSGLGKTA) the composition is skewed to gly residues.

Belongs to the universal ribosomal protein uL15 family. As to quaternary structure, part of the 50S ribosomal subunit.

Its function is as follows. Binds to the 23S rRNA. The protein is Large ribosomal subunit protein uL15 of Ralstonia nicotianae (strain ATCC BAA-1114 / GMI1000) (Ralstonia solanacearum).